Here is a 423-residue protein sequence, read N- to C-terminus: MNIISVGVNHKTAPIEIRERIALSEVQNKEFITDLISSGLAHEAMVVSTCNRTELYVVPAMTEVTGEYLKEYLISFKDARKEVRPEHFFSRFYCGTARHLFEVSSAIDSLVLGEGQILGQVKDAYRIAAEVQAAGILITRLCHTAFSVAKKVKTKTKIMEGAVSVSYAAVELAQKIFSNLSMKKILLIGAGETGELAAKHMCQKNARNIVITNRTLSKAEALAEELGTGKVLPFESYKEYLHEFDIIITAVSTKEYVLREAEMHQSMQKRRLKPVIILDLGLPRNVDPDISRLQNMFLKDIDALKHIIDKNLEKRRGELPKVQAIIEEELVSFGQWINTLKVRPTIVDLQSKFIEIKEKELERYRYKVSEEELRRMEHLTERILKKILHHPIKMLKAPIDTSDSIPSRVNLVRNIFDLEEPNQ.

Residues 49 to 52, Ser-109, 114 to 116, and Gln-120 each bind substrate; these read TCNR and EGQ. The Nucleophile role is filled by Cys-50. 189 to 194 lines the NADP(+) pocket; it reads GAGETG.

This sequence belongs to the glutamyl-tRNA reductase family. In terms of assembly, homodimer.

The enzyme catalyses (S)-4-amino-5-oxopentanoate + tRNA(Glu) + NADP(+) = L-glutamyl-tRNA(Glu) + NADPH + H(+). It functions in the pathway porphyrin-containing compound metabolism; protoporphyrin-IX biosynthesis; 5-aminolevulinate from L-glutamyl-tRNA(Glu): step 1/2. It participates in porphyrin-containing compound metabolism; chlorophyll biosynthesis. Catalyzes the NADPH-dependent reduction of glutamyl-tRNA(Glu) to glutamate 1-semialdehyde (GSA). This chain is Glutamyl-tRNA reductase, found in Chlorobium limicola (strain DSM 245 / NBRC 103803 / 6330).